The chain runs to 136 residues: UPF0275 protein PM0493 (136 aa).

It belongs to the UPF0275 family.

The protein is UPF0275 protein PM0493 of Pasteurella multocida (strain Pm70).